We begin with the raw amino-acid sequence, 530 residues long: Arginine--tRNA ligase (530 aa).

The short motif at 113–123 (ANPTGPLHIGH) is the 'HIGH' region element.

Belongs to the class-I aminoacyl-tRNA synthetase family. As to quaternary structure, monomer.

The protein resides in the cytoplasm. It catalyses the reaction tRNA(Arg) + L-arginine + ATP = L-arginyl-tRNA(Arg) + AMP + diphosphate. The chain is Arginine--tRNA ligase from Campylobacter jejuni subsp. doylei (strain ATCC BAA-1458 / RM4099 / 269.97).